A 264-amino-acid polypeptide reads, in one-letter code: Thymidylate synthase (264 aa).

Arginine 21 contributes to the dUMP binding site. Histidine 51 lines the (6R)-5,10-methylene-5,6,7,8-tetrahydrofolate pocket. 126–127 is a dUMP binding site; sequence RR. Catalysis depends on cysteine 146, which acts as the Nucleophile. DUMP is bound by residues 166-169, asparagine 177, and 207-209; these read RSAD and HIY. Aspartate 169 contributes to the (6R)-5,10-methylene-5,6,7,8-tetrahydrofolate binding site. Serine 263 contacts (6R)-5,10-methylene-5,6,7,8-tetrahydrofolate.

Belongs to the thymidylate synthase family. Bacterial-type ThyA subfamily. In terms of assembly, homodimer.

It localises to the cytoplasm. It catalyses the reaction dUMP + (6R)-5,10-methylene-5,6,7,8-tetrahydrofolate = 7,8-dihydrofolate + dTMP. The protein operates within pyrimidine metabolism; dTTP biosynthesis. Catalyzes the reductive methylation of 2'-deoxyuridine-5'-monophosphate (dUMP) to 2'-deoxythymidine-5'-monophosphate (dTMP) while utilizing 5,10-methylenetetrahydrofolate (mTHF) as the methyl donor and reductant in the reaction, yielding dihydrofolate (DHF) as a by-product. This enzymatic reaction provides an intracellular de novo source of dTMP, an essential precursor for DNA biosynthesis. The polypeptide is Thymidylate synthase (Bacillus velezensis (strain DSM 23117 / BGSC 10A6 / LMG 26770 / FZB42) (Bacillus amyloliquefaciens subsp. plantarum)).